The sequence spans 202 residues: Cytochrome c oxidase assembly protein CtaG (202 aa).

Topologically, residues 1–14 (MSDKAAAPRKQGRN) are cytoplasmic. The chain crosses the membrane as a helical; Signal-anchor for type II membrane protein span at residues 15–37 (NGAVVMMCLSFVFGMGAMSYAAV). At 38–202 (PLYRIFCQVT…GGTVKIEKKL (165 aa)) the chain is on the periplasmic side.

It belongs to the COX11/CtaG family.

It localises to the cell inner membrane. Its function is as follows. Exerts its effect at some terminal stage of cytochrome c oxidase synthesis, probably by being involved in the insertion of the copper B into subunit I. The polypeptide is Cytochrome c oxidase assembly protein CtaG (Rhizobium etli (strain ATCC 51251 / DSM 11541 / JCM 21823 / NBRC 15573 / CFN 42)).